The chain runs to 174 residues: ATP-dependent protease subunit HslV (174 aa).

The active site involves Thr2. Na(+) contacts are provided by Gly157, Cys160, and Thr163.

The protein belongs to the peptidase T1B family. HslV subfamily. A double ring-shaped homohexamer of HslV is capped on each side by a ring-shaped HslU homohexamer. The assembly of the HslU/HslV complex is dependent on binding of ATP.

The protein localises to the cytoplasm. It carries out the reaction ATP-dependent cleavage of peptide bonds with broad specificity.. Its activity is regulated as follows. Allosterically activated by HslU binding. Functionally, protease subunit of a proteasome-like degradation complex believed to be a general protein degrading machinery. The protein is ATP-dependent protease subunit HslV of Shewanella putrefaciens (strain CN-32 / ATCC BAA-453).